Here is a 311-residue protein sequence, read N- to C-terminus: Non-homologous end joining protein Ku (311 aa).

The Ku domain maps to I26–A210. A disordered region spans residues A269–S311. The segment covering P282–K293 has biased composition (low complexity). Basic residues predominate over residues K301 to S311.

The protein belongs to the prokaryotic Ku family. Homodimer. Interacts with LigD.

Its subcellular location is the spore core. With LigD forms a non-homologous end joining (NHEJ) DNA repair enzyme, which repairs dsDNA breaks with reduced fidelity. Binds linear dsDNA with 5'- and 3'- overhangs but not closed circular dsDNA nor ssDNA. Recruits and stimulates the ligase activity of LigD. Probably involved in DNA repair during spore germination. This is Non-homologous end joining protein Ku from Bacillus subtilis (strain 168).